The chain runs to 273 residues: 4-hydroxy-tetrahydrodipicolinate reductase (273 aa).

Residues Gly-12–Met-17 and Glu-38 contribute to the NAD(+) site. Arg-39 lines the NADP(+) pocket. Residues Gly-102–Thr-104 and Ala-126–Phe-129 each bind NAD(+). His-159 acts as the Proton donor/acceptor in catalysis. His-160 serves as a coordination point for (S)-2,3,4,5-tetrahydrodipicolinate. Catalysis depends on Lys-163, which acts as the Proton donor. Residue Gly-169–Thr-170 participates in (S)-2,3,4,5-tetrahydrodipicolinate binding.

This sequence belongs to the DapB family. As to quaternary structure, homotetramer.

It localises to the cytoplasm. The catalysed reaction is (S)-2,3,4,5-tetrahydrodipicolinate + NAD(+) + H2O = (2S,4S)-4-hydroxy-2,3,4,5-tetrahydrodipicolinate + NADH + H(+). It catalyses the reaction (S)-2,3,4,5-tetrahydrodipicolinate + NADP(+) + H2O = (2S,4S)-4-hydroxy-2,3,4,5-tetrahydrodipicolinate + NADPH + H(+). It functions in the pathway amino-acid biosynthesis; L-lysine biosynthesis via DAP pathway; (S)-tetrahydrodipicolinate from L-aspartate: step 4/4. Catalyzes the conversion of 4-hydroxy-tetrahydrodipicolinate (HTPA) to tetrahydrodipicolinate. This is 4-hydroxy-tetrahydrodipicolinate reductase from Proteus mirabilis (strain HI4320).